Consider the following 691-residue polypeptide: MARTQAEPPASQPDVRAAWLRDQLERANYAYYVLDQPDLPDAEYDRLFRELQQLESDHPDLVTPDSPTQRVGGAVASGFTPVVHDAPMLSLNNGFADDDIVAFDKRVADALGKTTDLAGSVTDPVEYACELKFDGLAISLRYEHGVFVQASTRGDGTTGEDVTENVRTIRSIPLKLKGDRVPAVLDVRGEVLMFKRDFARLNERQRAAEQREFANPRNAAAGSLRQLDPKITAQRPLSFFAYGIGVLDGMPMPDTHSALLDWYEALGLPVNRERAVVYGAQGLLDFFRKVGEKRESLPYDIDGVVYKVNRRDEQDRLGFVSRAPRFALAHKFPAQEALTKLVAIGVQVGRTGAITPVARLEPVFVGGATVTNATLHNEDEVRRKDIRIGDTVIVRRAGDVIPEVVGAVLDRRPADAAEFVMPTECPVCGSKIERLPDEAIARCTGGLFCPAQRKQALWHFAQRRALDIDGLGEKIIDQLVELNLVRTPADLFNLGFATLAELDRFAEKSAQNLLDSLEKAKHTTLARFIYALGIRHVGESTAKDLAKHFGSLDPIMNATIDELLEVNDVGPIVAESIHQFFAEEHNRTVIEQLRAPGKVTWPEGPPAPKAPQGVLAGKTVVLTGTLPNLTRDDAKEMLEAAGAKVAGSVSKKTDYVIAGAEAGSKLAKAEALGIPVLDEDGLHQLLEGNTR.

Residues 41-45, 90-91, and E130 each bind NAD(+); these read DAEYD and SL. K132 functions as the N6-AMP-lysine intermediate in the catalytic mechanism. R153, E190, K307, and K331 together coordinate NAD(+). 4 residues coordinate Zn(2+): C425, C428, C443, and C449. Residues 610–691 enclose the BRCT domain; sequence APQGVLAGKT…LHQLLEGNTR (82 aa).

Belongs to the NAD-dependent DNA ligase family. LigA subfamily. Mg(2+) is required as a cofactor. Requires Mn(2+) as cofactor.

The enzyme catalyses NAD(+) + (deoxyribonucleotide)n-3'-hydroxyl + 5'-phospho-(deoxyribonucleotide)m = (deoxyribonucleotide)n+m + AMP + beta-nicotinamide D-nucleotide.. Its function is as follows. DNA ligase that catalyzes the formation of phosphodiester linkages between 5'-phosphoryl and 3'-hydroxyl groups in double-stranded DNA using NAD as a coenzyme and as the energy source for the reaction. It is essential for DNA replication and repair of damaged DNA. The sequence is that of DNA ligase from Burkholderia multivorans (strain ATCC 17616 / 249).